The following is a 145-amino-acid chain: Lymphocyte antigen 6 complex locus protein G5c (145 aa).

An N-terminal signal peptide occupies residues 1–38; sequence MSGLAASWSLKPLGPHGVTQALCAVLLAVLVTMNVVLG. Positions 55-145 constitute a UPAR/Ly6 domain; sequence LHCYRCLLET…NPKNRKNTMH (91 aa). Cystine bridges form between Cys57–Cys84, Cys60–Cys69, Cys76–Cys102, Cys111–Cys128, and Cys129–Cys134. Asn91 is a glycosylation site (N-linked (GlcNAc...) asparagine).

In terms of assembly, forms oligomers. In terms of processing, N-glycosylated. In terms of tissue distribution, expression restricted to the caput of epididymis. Detected only from day 24 postnatum.

The protein resides in the secreted. Its function is as follows. May have a role in hematopoietic cell differentiation. The protein is Lymphocyte antigen 6 complex locus protein G5c (Ly6g5c) of Rattus norvegicus (Rat).